Consider the following 354-residue polypeptide: DNA polymerase IV (354 aa).

Residues Ile6–Gly187 enclose the UmuC domain. Mg(2+)-binding residues include Asp10 and Asp105. Glu106 is an active-site residue.

This sequence belongs to the DNA polymerase type-Y family. Monomer. It depends on Mg(2+) as a cofactor.

Its subcellular location is the cytoplasm. It catalyses the reaction DNA(n) + a 2'-deoxyribonucleoside 5'-triphosphate = DNA(n+1) + diphosphate. Poorly processive, error-prone DNA polymerase involved in untargeted mutagenesis. Copies undamaged DNA at stalled replication forks, which arise in vivo from mismatched or misaligned primer ends. These misaligned primers can be extended by PolIV. Exhibits no 3'-5' exonuclease (proofreading) activity. May be involved in translesional synthesis, in conjunction with the beta clamp from PolIII. In Pseudomonas entomophila (strain L48), this protein is DNA polymerase IV.